A 193-amino-acid polypeptide reads, in one-letter code: Potassium-transporting ATPase KdpC subunit (193 aa).

Residues 8 to 28 (VVLLIFLTLITGVAYPLLATG) traverse the membrane as a helical segment.

This sequence belongs to the KdpC family. As to quaternary structure, the system is composed of three essential subunits: KdpA, KdpB and KdpC.

It is found in the cell inner membrane. In terms of biological role, part of the high-affinity ATP-driven potassium transport (or Kdp) system, which catalyzes the hydrolysis of ATP coupled with the electrogenic transport of potassium into the cytoplasm. This subunit acts as a catalytic chaperone that increases the ATP-binding affinity of the ATP-hydrolyzing subunit KdpB by the formation of a transient KdpB/KdpC/ATP ternary complex. This chain is Potassium-transporting ATPase KdpC subunit, found in Photorhabdus laumondii subsp. laumondii (strain DSM 15139 / CIP 105565 / TT01) (Photorhabdus luminescens subsp. laumondii).